The chain runs to 103 residues: MMTNQRIRIRLKAYDHKLLDQSTSEIVMTAKKTGARVAGPIPLPTKIHRYTVLRSPHVDKKSREQFEIRVHKRLIDILEPTQQTVDSLMKLDLSAGVDVEIKL.

This sequence belongs to the universal ribosomal protein uS10 family. In terms of assembly, part of the 30S ribosomal subunit.

Involved in the binding of tRNA to the ribosomes. This chain is Small ribosomal subunit protein uS10, found in Syntrophobacter fumaroxidans (strain DSM 10017 / MPOB).